The sequence spans 297 residues: 4-hydroxy-tetrahydrodipicolinate synthase (297 aa).

T45 contributes to the pyruvate binding site. Y133 (proton donor/acceptor) is an active-site residue. K161 (schiff-base intermediate with substrate) is an active-site residue. I205 is a binding site for pyruvate.

It belongs to the DapA family. Homotetramer; dimer of dimers.

The protein localises to the cytoplasm. It carries out the reaction L-aspartate 4-semialdehyde + pyruvate = (2S,4S)-4-hydroxy-2,3,4,5-tetrahydrodipicolinate + H2O + H(+). The protein operates within amino-acid biosynthesis; L-lysine biosynthesis via DAP pathway; (S)-tetrahydrodipicolinate from L-aspartate: step 3/4. Its function is as follows. Catalyzes the condensation of (S)-aspartate-beta-semialdehyde [(S)-ASA] and pyruvate to 4-hydroxy-tetrahydrodipicolinate (HTPA). The protein is 4-hydroxy-tetrahydrodipicolinate synthase of Dichelobacter nodosus (strain VCS1703A).